Consider the following 712-residue polypeptide: Anaerobic ribonucleoside-triphosphate reductase (712 aa).

The region spanning 3-92 (PHVMKRDGCK…EYRHDRDIER (90 aa)) is the ATP-cone domain. Residues 583-708 (KKVNPYDKID…VKRRVKHLGN (126 aa)) enclose the Glycine radical domain. Zn(2+) contacts are provided by cysteine 644, cysteine 647, cysteine 662, and cysteine 665. Glycine 681 carries the post-translational modification Glycine radical.

The protein belongs to the anaerobic ribonucleoside-triphosphate reductase family. As to quaternary structure, homodimer. Forms a tetramer composed of two NrdD and two NrdG subunits.

The enzyme catalyses a ribonucleoside 5'-triphosphate + formate + H(+) = a 2'-deoxyribonucleoside 5'-triphosphate + CO2 + H2O. The catalysed reaction is formate + ATP + H(+) = dATP + CO2 + H2O. It catalyses the reaction CTP + formate + H(+) = dCTP + CO2 + H2O. It carries out the reaction GTP + formate + H(+) = dGTP + CO2 + H2O. The enzyme catalyses UTP + formate + H(+) = dUTP + CO2 + H2O. Activated under anaerobic conditions by NrdG, a tightly associated activase. Activation involves the formation of a glycyl radical at Gly-681. Exposure of the activated reductase to oxygen leads to C-terminal truncation and inactivation of the protein, by cleavage at the N-terminal side of Gly-681. The presence of zinc protects the protein from proteolysis and prevents the formation of disulfide bridges within it. The enzyme shows a basal activity in the absence of any effector, but reduction is stimulated up to 10-fold by an appropriate modulator (dGTP for ATP reduction, ATP for CTP and UTP reduction, and dTTP for GTP reduction). dGTP and dTTP inhibit the reduction of the incorrect substrate, and dATP inhibits reduction of all four. These modulators act as allosteric effectors. In terms of biological role, catalyzes the conversion of ribonucleotides into deoxyribonucleotides, which are required for DNA synthesis and repair. Can reduce each of the four common ribonucleoside triphosphates. The polypeptide is Anaerobic ribonucleoside-triphosphate reductase (Escherichia coli (strain K12)).